The sequence spans 203 residues: Cryptic neisserial protein 1 (203 aa).

Positions 1–18 are cleaved as a signal peptide; that stretch reads MRRAILLILTLTVGTSLA.

It belongs to the Cnp family.

It is found in the periplasm. The protein localises to the cytoplasm. This chain is Cryptic neisserial protein 1, found in Neisseria gonorrhoeae (strain ATCC 700825 / FA 1090).